The primary structure comprises 261 residues: Uridylate kinase (261 aa).

The disordered stretch occupies residues 1 to 23 (MTEPDVAGAPASKPEPASTGAAS). Residue 36 to 39 (KLGG) coordinates ATP. Gly77 serves as a coordination point for UMP. Gly78 and Arg82 together coordinate ATP. Residues Asp97 and 158–165 (MGLPYFST) each bind UMP. Residues Phe191 and Asp194 each contribute to the ATP site.

This sequence belongs to the UMP kinase family. In terms of assembly, homohexamer.

It is found in the cytoplasm. It carries out the reaction UMP + ATP = UDP + ADP. Its pathway is pyrimidine metabolism; CTP biosynthesis via de novo pathway; UDP from UMP (UMPK route): step 1/1. With respect to regulation, inhibited by UTP. In terms of biological role, catalyzes the reversible phosphorylation of UMP to UDP. The protein is Uridylate kinase of Mycobacterium tuberculosis (strain ATCC 25177 / H37Ra).